The following is a 248-amino-acid chain: NLP effector protein Pc121494 (248 aa).

The signal sequence occupies residues 1 to 19 (MKFIAVLIAAIASLSAVQA). The Hepta-peptide GHRHDWE motif motif lies at 124–130 (GHRNGWE). N143 carries N-linked (GlcNAc...) asparagine glycosylation.

The protein belongs to the Necrosis inducing protein (NPP1) family.

Its subcellular location is the secreted. Its function is as follows. Secreted effector that contributes strongly to virulence during infection by P.capsici. This is NLP effector protein Pc121494 from Phytophthora capsici.